A 257-amino-acid chain; its full sequence is Protein YIPF5 (257 aa).

Topologically, residues 1–124 (MSGFENLNTD…KVADGSIMNE (124 aa)) are cytoplasmic. The segment at 75–106 (PASPQPFYGNSFEDEPPLLEELGINFDHIWQK) is interaction with Sec23. Residues 125 to 145 (TDLAGPMVFCLAFGATLLLAG) traverse the membrane as a helical segment. A topological domain (lumenal) is located at residue K146. The helical transmembrane segment at 147-167 (IQFGYVYGISAIGCLGMFCLL) threads the bilayer. Topologically, residues 168-173 (NLMSMT) are cytoplasmic. A helical transmembrane segment spans residues 174 to 194 (GVSFGCVASVLGYCLLPMILL). Topologically, residues 195 to 196 (SS) are lumenal. A helical membrane pass occupies residues 197-217 (FAVIFSLQGMVGIILTAGIIG). At 218-236 (WCSFSASKIFISALAMEGQ) the chain is on the cytoplasmic side. A helical transmembrane segment spans residues 237–257 (QLLVAYPCALLYGVFALISVF).

It belongs to the YIP1 family. Interacts with the COPII coat components Sec23 (SEC23A and/or SEC23B) and Sec24 (SEC24A and/or SEC24B). Interacts with YIF1A. May interact with RAB1A. Interacts with YIPF3 and YIPF4.

It localises to the endoplasmic reticulum membrane. It is found in the golgi apparatus. The protein resides in the cis-Golgi network membrane. Its subcellular location is the cytoplasmic vesicle. The protein localises to the COPII-coated vesicle. Its function is as follows. Plays a role in transport between endoplasmic reticulum and Golgi. In pancreatic beta cells, required to transport proinsulin from endoplasmic reticulum into the Golgi. This chain is Protein YIPF5 (YIPF5), found in Macaca fascicularis (Crab-eating macaque).